The chain runs to 166 residues: Small ribosomal subunit protein uS5 (166 aa).

Positions 11–74 (LQEKLVQVNR…EAARKNMVDV (64 aa)) constitute an S5 DRBM domain.

Belongs to the universal ribosomal protein uS5 family. As to quaternary structure, part of the 30S ribosomal subunit. Contacts proteins S4 and S8.

With S4 and S12 plays an important role in translational accuracy. In terms of biological role, located at the back of the 30S subunit body where it stabilizes the conformation of the head with respect to the body. This is Small ribosomal subunit protein uS5 from Marinobacter nauticus (strain ATCC 700491 / DSM 11845 / VT8) (Marinobacter aquaeolei).